Reading from the N-terminus, the 367-residue chain is MDAQSSAKVNSRKRRKEVPGPNGATEEDGIPSKVQRCAVGLRQPAPFSDEIEVDFSKPYVRVTMEEACRGTPCERPVRVYADGIFDLFHSGHARALMQAKNLFPNTYLIVGVCSDELTHNFKGFTVMNENERYDAVQHCRYVDEVVRNAPWTLTPEFLAEHRIDFVAHDDIPYSSAGSDDVYKHIKEAGMFAPTQRTEGISTSDIITRIVRDYDVYARRNLQRGYTAKELNVSFINEKKYHLQERVDKVKKKVKDVEEKSKEFVQKVEEKSIDLIQKWEEKSREFIGSFLEMFGPEGALKHMLKEGKGRMLQAISPKQSPSSSPTHERSPSPSFRWPFSGKTSPSSSPASLSRCKAVTCDISEDEED.

Methionine 1 carries the post-translational modification N-acetylmethionine. A disordered region spans residues 1-31; sequence MDAQSSAKVNSRKRRKEVPGPNGATEEDGIP. The residue at position 8 (lysine 8) is an N6-acetyllysine. Residues isoleucine 84, phenylalanine 85, histidine 92, and lysine 122 each coordinate CTP. Phosphocholine-binding residues include lysine 122 and tryptophan 151. CTP-binding residues include histidine 168, aspartate 169, tyrosine 173, glutamine 195, arginine 196, threonine 197, and isoleucine 200. Amphipathic regions lie at residues 228 to 287 and 298 to 315; these read KELN…EFIG and ALKH…QAIS. At serine 233 the chain carries Phosphoserine. The autoinhibitory (AI) stretch occupies residues 272–293; that stretch reads IDLIQKWEEKSREFIGSFLEMF. The segment at 313–367 is disordered; the sequence is AISPKQSPSSSPTHERSPSPSFRWPFSGKTSPSSSPASLSRCKAVTCDISEDEED. Position 315 is a phosphoserine; by PKC (serine 315). Polar residues predominate over residues 315-324; sequence SPKQSPSSSP. Residues serine 319, serine 321, serine 322, and serine 323 each carry the phosphoserine modification. Copy 1 of the repeat occupies 319–324; the sequence is SPSSSP. Residues 319–348 are 3 X repeats; that stretch reads SPSSSPTHERSPSPSFRWPFSGKTSPSSSP. At threonine 325 the chain carries Phosphothreonine. Serine 329 and serine 331 each carry phosphoserine. Residues 329-333 form a 2; approximate repeat; it reads SPSPS. A compositionally biased stretch (low complexity) spans 330–352; sequence PSPSFRWPFSGKTSPSSSPASLS. A Phosphoserine; by PKC modification is found at serine 333. The residue at position 342 (threonine 342) is a Phosphothreonine. 6 positions are modified to phosphoserine: serine 343, serine 345, serine 346, serine 347, serine 350, and serine 352. Repeat 3 spans residues 343–348; that stretch reads SPSSSP. Threonine 358 bears the Phosphothreonine mark. Serine 362 is subject to Phosphoserine; by CK2.

It belongs to the cytidylyltransferase family. In terms of assembly, homodimer. Post-translationally, the serine residues of the C-terminus are phosphorylated. The inactive soluble form is stabilized by phosphorylation, the active membrane bound form is promoted by anionic lipids or diacylglycerol, and is stabilized by dephosphorylation. In terms of processing, the N-terminus is blocked. Monoubiquitinated by the SCF(FBXL2) complex, leading to proteasomal degradation.

Its subcellular location is the cytoplasm. It localises to the cytosol. It is found in the membrane. The protein resides in the endoplasmic reticulum membrane. The protein localises to the nucleus. The catalysed reaction is phosphocholine + CTP + H(+) = CDP-choline + diphosphate. It participates in phospholipid metabolism; phosphatidylcholine biosynthesis; phosphatidylcholine from phosphocholine: step 1/2. Interconverts between an inactive cytosolic form and an active membrane-bound form. Activation involves disruption of an inhibitory interaction between helices at the base of the active site and the autoinhibitory (AI) region. Activated by N-methylethanolamine. Activated by oleic acid-containing phosphatidylcholine vesicles. In terms of biological role, catalyzes the key rate-limiting step in the CDP-choline pathway for phosphatidylcholine biosynthesis. The polypeptide is Choline-phosphate cytidylyltransferase A (Pcyt1a) (Rattus norvegicus (Rat)).